The chain runs to 430 residues: Enolase (430 aa).

Residue Gln164 coordinates (2R)-2-phosphoglycerate. The Proton donor role is filled by Glu206. Asp243, Glu286, and Asp313 together coordinate Mg(2+). Residues Lys338, Arg367, Ser368, and Lys389 each contribute to the (2R)-2-phosphoglycerate site. The active-site Proton acceptor is the Lys338.

Belongs to the enolase family. Component of the RNA degradosome, a multiprotein complex involved in RNA processing and mRNA degradation. Mg(2+) serves as cofactor.

Its subcellular location is the cytoplasm. The protein localises to the secreted. It localises to the cell surface. The enzyme catalyses (2R)-2-phosphoglycerate = phosphoenolpyruvate + H2O. It functions in the pathway carbohydrate degradation; glycolysis; pyruvate from D-glyceraldehyde 3-phosphate: step 4/5. Functionally, catalyzes the reversible conversion of 2-phosphoglycerate (2-PG) into phosphoenolpyruvate (PEP). It is essential for the degradation of carbohydrates via glycolysis. In Dichelobacter nodosus (strain VCS1703A), this protein is Enolase.